The primary structure comprises 126 residues: UPF0231 protein VC0395_A0134/VC395_0622 (126 aa).

The protein belongs to the UPF0231 family.

This is UPF0231 protein VC0395_A0134/VC395_0622 from Vibrio cholerae serotype O1 (strain ATCC 39541 / Classical Ogawa 395 / O395).